We begin with the raw amino-acid sequence, 286 residues long: Bifunctional protein FolD (286 aa).

Residues 165–167 and Ser190 each bind NADP(+); that span reads GRS.

The protein belongs to the tetrahydrofolate dehydrogenase/cyclohydrolase family. In terms of assembly, homodimer.

It carries out the reaction (6R)-5,10-methylene-5,6,7,8-tetrahydrofolate + NADP(+) = (6R)-5,10-methenyltetrahydrofolate + NADPH. The catalysed reaction is (6R)-5,10-methenyltetrahydrofolate + H2O = (6R)-10-formyltetrahydrofolate + H(+). It participates in one-carbon metabolism; tetrahydrofolate interconversion. Functionally, catalyzes the oxidation of 5,10-methylenetetrahydrofolate to 5,10-methenyltetrahydrofolate and then the hydrolysis of 5,10-methenyltetrahydrofolate to 10-formyltetrahydrofolate. This Staphylococcus aureus (strain bovine RF122 / ET3-1) protein is Bifunctional protein FolD.